The sequence spans 64 residues: Translation machinery-associated protein 7 (64 aa).

A disordered region spans residues 1-64 (MSGREGGKKK…GSGIKKSGKK (64 aa)). Positions 21 to 50 (DMDDDDVAFKQKQKEDQKAMEALKARASGK) form a coiled coil. A compositionally biased stretch (basic and acidic residues) spans 27 to 44 (VAFKQKQKEDQKAMEALK).

It belongs to the TMA7 family.

In Tetraodon nigroviridis (Spotted green pufferfish), this protein is Translation machinery-associated protein 7 (tma7).